Reading from the N-terminus, the 130-residue chain is Flagellar assembly factor FliW (130 aa).

It belongs to the FliW family. As to quaternary structure, interacts with translational regulator CsrA and flagellin(s).

It is found in the cytoplasm. In terms of biological role, acts as an anti-CsrA protein, binds CsrA and prevents it from repressing translation of its target genes, one of which is flagellin. Binds to flagellin and participates in the assembly of the flagellum. This chain is Flagellar assembly factor FliW, found in Borrelia hermsii (strain HS1 / DAH).